Consider the following 680-residue polypeptide: DNA ligase (680 aa).

NAD(+) is bound by residues Asp35–Asp39, Ser84–Leu85, and Glu115. Lys117 acts as the N6-AMP-lysine intermediate in catalysis. Arg138, Glu174, Lys291, and Lys315 together coordinate NAD(+). 4 residues coordinate Zn(2+): Cys419, Cys422, Cys437, and Cys442. One can recognise a BRCT domain in the interval Asn601–Ser680.

It belongs to the NAD-dependent DNA ligase family. LigA subfamily. The cofactor is Mg(2+). Mn(2+) is required as a cofactor.

It carries out the reaction NAD(+) + (deoxyribonucleotide)n-3'-hydroxyl + 5'-phospho-(deoxyribonucleotide)m = (deoxyribonucleotide)n+m + AMP + beta-nicotinamide D-nucleotide.. Functionally, DNA ligase that catalyzes the formation of phosphodiester linkages between 5'-phosphoryl and 3'-hydroxyl groups in double-stranded DNA using NAD as a coenzyme and as the energy source for the reaction. It is essential for DNA replication and repair of damaged DNA. In Dehalococcoides mccartyi (strain ATCC BAA-2100 / JCM 16839 / KCTC 5957 / BAV1), this protein is DNA ligase.